Reading from the N-terminus, the 2071-residue chain is MPLKWAARNKKPPSAPQSCASKPSSASQSSCVDERISATPRSSISSNSSPNSKNNMSRHSHSNGSVYSDETTLKTAQTHYTQQGQQAKPQQHTQQQQQQPQTPMQLQVPTGQAHKRTLTCEDMKAGARCEEQVSPCSQPAGSPVRRGGGLNGETYDGTVFRLGWVNKAQGAAPAREGRYSHQPTASLSSIGSERPHFTGGGTSGYQYVATAYRLHRAQLKGCILNLYKSGLTNVKYFDPALEPSAAALQMHQERQEMPLLQPPLPSEAVPAPSILEASMESGELRLEYLSEAYPHPDLQLDKKDGKILSGSLESLCHAVLFMPTTDAKRVTDILLLLPLLDDFTRVLNYFNLFGKVFSKHHPAGAAGADDLNQNYNISNETDRQLTLRLATVVQTVLDMFPGFLLDDKIFQSLVILLDTISFHDEDTSQELKVAIAEKQTVLVKLTGFANEPIQSAKLDVLIKVQSFLKLDTEKVANQIHKINLTFNRVWSPQADYSLLYDSQYTQKHVELNPLVFFNDKNVQYLSRLMVSHIFCEETGFTPKKRAEVLTKWVQLGCKFERLGDMVSWLAIATVICSIPVLRLTRTWQYVPDSYLKIIFKDWVPTIVQLDRRQMSSKSMNSVFILAPPNLNDAFVRDNVIPYFGDLVIHSDDLPRDSKYKYLEKKIRRTKNAFYKWQQRLDQAFAQDRDSASSFTDSLHLDEEEHDVADFYQYWRFHMNLPPMNIETIMEMSLKMEPPSINQQTYSKTYSTRSALISGAYLPTLFTTLLPSYSLFPQELLIAAASTPSTKNNNSSQASNRISQLSVNSTPHSNASSSSAASAVTGIDNIDVPITKEISSKLSNKQVLLKFIRDMFNVDINVFHISDDVIFKSIRDYEAKSRPTSVVIESPKRLSLLSSVSPDVSAVSSALENLDLFKNFNSSSDDIAEFTVQVVLKCASLEKIFDILVLTSRVFSNLVTTTDLVSYFNSEKARREKSGAQHNGQHSIGLLDFALISLIMDNELFAETFFNNYKSFTTTLCVLENLAKRFIGAKSSAISISLINKLRNSESSRQIPPSTTSNQFSASGIFKPSYDELKFPVWDLKVTSVEGCPLDYLAKIQIGVLESLYHLIREHYADFTDDLANNKTFLDILKIINQEVYDEWDKRLDDLRNNNNSSQKRKNSCDDNSSAKITFHVNDARPENSNENKRGAATNLGDSSLAALEKLQCTLQDLYVKIKSSYQRQLYRPLGVTRNCRKVHDMLCQFQPQTSMSALIMNGSSDTLDKMVTEFQALKHTDYDDIINWIYKLDHFITSKLKLVSNQDWIQVSQILESLSNDSLVALFNYPLHAESNNVIASGSSQLDDLQILDIFTWLSTLESGSAHIIDKFPASVQLIVRLHLSLTKFFTVHIAHLHSTYEARVNTCSLILEILNFVHVKNANVNLFHSDDAGEGSMATISPHVPSFIETAIENAIISPESRFFEVSWKQAYKTISEKDEKLTFIGSVLTGLDKSTAHFLDADNRQPVRPKNFSPCPGWFISRLLEITGLVPNMSIENSKMINFDKRRFINNIVINYQDLIPNTEQLPSHDDEKSAHQFGSILFHYGTESSIKAFRKASKEAASNEARKLKFQAMGLFNDILVTEVYKVQRDQKKQEQLTVQEHEAKRSVLIQHPNKVSVSSASSSVSGSSSGSTARTSNPAHAAYALNMAGSLSISAARHGRSSVSSRSSVISNTATATSPASGASPNQTSTSHHGGMGKKIGGFLRRPFSISGFTSSSSQYTTTSVVLSGVQANGSISPYELPELTSEIQDTKIVTVIKTFEIKSCIQINNYRQDPDMMHCFKIVMEDGTQHTLQCMDDADMHEWMKAITLSKRYSFHSKRFKGKTSNKIFGVPVEDVCEREGALIPNIIVKLLDEIELRGLDEVGLYRVPGSVGSINALKNAFDDEGAVHNTFTLEDDRWFEINTIAGCFKLYLRELPESLFTNEKVDEFVNIMTAYKNHEVDLSQFQNGIKTLLSTLPVFNYHILKRLFLHLNRVHQHVENNRMDASNLAIVFSMSFINQDDLASTMGPTLGLLQMLLQHLIRNPEHYFT.

2 disordered regions span residues 1 to 115 (MPLK…QAHK) and 171 to 195 (AAPAREGRYSHQPTASLSSIGSERP). Low complexity-rich tracts occupy residues 16-31 (PQSCASKPSSASQSSC) and 42-55 (SSISSNSSPNSKNN). Residues 62 to 80 (SNGSVYSDETTLKTAQTHY) are compositionally biased toward polar residues. A compositionally biased stretch (low complexity) spans 81 to 110 (TQQGQQAKPQQHTQQQQQQPQTPMQLQVPT). Over residues 181-191 (HQPTASLSSIG) the composition is skewed to polar residues. One can recognise a Ras-GEF domain in the interval 471-738 (DTEKVANQIH…MEMSLKMEPP (268 aa)). Polar residues predominate over residues 787 to 811 (PSTKNNNSSQASNRISQLSVNSTPH). Disordered stretches follow at residues 787-819 (PSTKNNNSSQASNRISQLSVNSTPHSNASSSSA), 1645-1676 (RSVLIQHPNKVSVSSASSSVSGSSSGSTARTS), and 1702-1738 (SVSSRSSVISNTATATSPASGASPNQTSTSHHGGMGK). 2 stretches are compositionally biased toward low complexity: residues 1656–1676 (SVSSASSSVSGSSSGSTARTS) and 1702–1726 (SVSSRSSVISNTATATSPASGASPN). Residues 1751–1853 (SGFTSSSSQY…WMKAITLSKR (103 aa)) enclose the PH domain. Residues 1872-2070 (VPVEDVCERE…HLIRNPEHYF (199 aa)) form the Rho-GAP domain.

GTPase-activating protein (GAP) for RHO proteins. Required for polarized growth and maintenance of cell polarity. The sequence is that of GTPase-activating protein BEM2 (BEM2) from Eremothecium gossypii (strain ATCC 10895 / CBS 109.51 / FGSC 9923 / NRRL Y-1056) (Yeast).